Reading from the N-terminus, the 362-residue chain is 4-hydroxythreonine-4-phosphate dehydrogenase (362 aa).

Residue Thr149 coordinates substrate. His184, His229, and His295 together coordinate a divalent metal cation. Substrate contacts are provided by Lys303, Asn312, and Arg321.

This sequence belongs to the PdxA family. As to quaternary structure, homodimer. A divalent metal cation is required as a cofactor.

Its subcellular location is the cytoplasm. The enzyme catalyses 4-(phosphooxy)-L-threonine + NAD(+) = 3-amino-2-oxopropyl phosphate + CO2 + NADH. The protein operates within cofactor biosynthesis; pyridoxine 5'-phosphate biosynthesis; pyridoxine 5'-phosphate from D-erythrose 4-phosphate: step 4/5. Functionally, catalyzes the NAD(P)-dependent oxidation of 4-(phosphooxy)-L-threonine (HTP) into 2-amino-3-oxo-4-(phosphooxy)butyric acid which spontaneously decarboxylates to form 3-amino-2-oxopropyl phosphate (AHAP). This chain is 4-hydroxythreonine-4-phosphate dehydrogenase, found in Nostoc sp. (strain PCC 7120 / SAG 25.82 / UTEX 2576).